Here is a 114-residue protein sequence, read N- to C-terminus: TYRO protein tyrosine kinase-binding protein (114 aa).

The first 27 residues, 1–27 (MGAPEPSWCFLFLPVLLTVGGLSPVQA), serve as a signal peptide directing secretion. Residues 28-42 (QSDNYPGCECSSVSP) are Extracellular-facing. The helical transmembrane segment at 43-63 (GVLAGIVLGDLVLTLLIALAV) threads the bilayer. Residue D52 participates in Ca(2+) binding. Topologically, residues 64 to 114 (YSLGRLVSRGRGTADGTRKQHMAETESPYQELQGQRPEVYSDLNTQRQYYR) are cytoplasmic. Residues 72–114 (RGRGTADGTRKQHMAETESPYQELQGQRPEVYSDLNTQRQYYR) form a disordered region. Residues 81-109 (RKQHMAETESPYQELQGQRPEVYSDLNTQ) form the ITAM domain. Residues Y92 and Y103 each carry the phosphotyrosine modification. Residues 105–114 (DLNTQRQYYR) are compositionally biased toward polar residues.

Belongs to the TYROBP family. As to quaternary structure, homodimer; disulfide-linked. Homotrimer; disulfide-linked. Homotetramer; disulfide-linked. Homotrimers and homotetramers form when low levels of partner receptors are available and is competitive with assembly with interacting receptors. They may represent alternative oligomerization states or may be intermediates in the receptor assembly process. Binding of a metal cation aids in homooligomerization through coordination of the metal ion by the subunits of the oligomer. Interacts with TREM1. Interacts with TREM2. Interacts with CLECSF5. Interacts with CD300LB and CD300C2. Interacts with CD300E. Interacts (via ITAM domain) with SYK (via SH2 domains); activates SYK mediating neutrophils and macrophages integrin-mediated activation. Interacts with KLRC2. Interacts with CD300H. Interacts with KLRD1. Interacts with SIGLEC1. Post-translationally, following ligand binding by associated receptors, tyrosine phosphorylated in the ITAM domain which leads to activation of additional tyrosine kinases and subsequent cell activation.

Its subcellular location is the cell membrane. In terms of biological role, adapter protein which non-covalently associates with activating receptors found on the surface of a variety of immune cells to mediate signaling and cell activation following ligand binding by the receptors. TYROBP is tyrosine-phosphorylated in the ITAM domain following ligand binding by the associated receptors which leads to activation of additional tyrosine kinases and subsequent cell activation. Also has an inhibitory role in some cells. Non-covalently associates with activating receptors of the CD300 family to mediate cell activation. Also mediates cell activation through association with activating receptors of the CD200R family. Required for neutrophil activation mediated by integrin. Required for the activation of myeloid cells mediated by the CLEC5A/MDL1 receptor. Associates with natural killer (NK) cell receptors such as the KLRD1/KLRC2 heterodimer to mediate NK cell activation. Associates with TREM1 to mediate activation of neutrophils and monocytes. Associates with TREM2 on monocyte-derived dendritic cells to mediate up-regulation of chemokine receptor CCR7 and dendritic cell maturation and survival. PAssociation with TREM2 mediates cytokine-induced formation of multinucleated giant cells which are formed by the fusion of macrophages. Stabilizes the TREM2 C-terminal fragment (TREM2-CTF) produced by TREM2 ectodomain shedding which suppresses the release of pro-inflammatory cytokines. In microglia, required with TREM2 for phagocytosis of apoptotic neurons. Required with ITGAM/CD11B in microglia to control production of microglial superoxide ions which promote the neuronal apoptosis that occurs during brain development. Promotes pro-inflammatory responses in microglia following nerve injury which accelerates degeneration of injured neurons. ositively regulates the expression of the IRAK3/IRAK-M kinase and IL10 production by liver dendritic cells and inhibits their T cell allosimulatory ability. Negatively regulates B cell proliferation. Required for CSF1-mediated osteoclast cytoskeletal organization. Positively regulates multinucleation during osteoclast development. This chain is TYRO protein tyrosine kinase-binding protein, found in Rattus norvegicus (Rat).